The primary structure comprises 212 residues: Adenylate kinase (212 aa).

10 to 15 (GAGKGT) contributes to the ATP binding site. The segment at 30 to 59 (STGDMFRAAMANQTEMGRLAKSYIDKGELV) is NMP. AMP is bound by residues Thr31, Arg36, 57–59 (ELV), 86–89 (GYPR), and Gln93. The tract at residues 127 to 159 (GRIINRKTGETFHKVFNPPVDYKEEDYYQREDD) is LID. Residues Arg128 and 137–138 (TF) each bind ATP. AMP is bound by residues Arg156 and Arg167. ATP is bound at residue Gln195.

Belongs to the adenylate kinase family. As to quaternary structure, monomer.

It localises to the cytoplasm. The enzyme catalyses AMP + ATP = 2 ADP. It participates in purine metabolism; AMP biosynthesis via salvage pathway; AMP from ADP: step 1/1. Functionally, catalyzes the reversible transfer of the terminal phosphate group between ATP and AMP. Plays an important role in cellular energy homeostasis and in adenine nucleotide metabolism. The sequence is that of Adenylate kinase from Streptococcus agalactiae serotype Ia (strain ATCC 27591 / A909 / CDC SS700).